Reading from the N-terminus, the 306-residue chain is Agmatinase (306 aa).

Mn(2+)-binding residues include H126, D149, H151, D153, D230, and D232.

This sequence belongs to the arginase family. Agmatinase subfamily. Requires Mn(2+) as cofactor.

It catalyses the reaction agmatine + H2O = urea + putrescine. It participates in amine and polyamine biosynthesis; putrescine biosynthesis via agmatine pathway; putrescine from agmatine: step 1/1. Its function is as follows. Catalyzes the formation of putrescine from agmatine. This is Agmatinase from Salmonella dublin (strain CT_02021853).